A 201-amino-acid chain; its full sequence is Recombination protein RecR (201 aa).

The C4-type zinc finger occupies 57-72; that stretch reads CKLCQIYTEQPLCNIC. Positions 80–175 constitute a Toprim domain; the sequence is TLLCVVESPA…KCSRIAHGVP (96 aa).

The protein belongs to the RecR family.

May play a role in DNA repair. It seems to be involved in an RecBC-independent recombinational process of DNA repair. It may act with RecF and RecO. This is Recombination protein RecR from Coxiella burnetii (strain RSA 493 / Nine Mile phase I).